A 192-amino-acid polypeptide reads, in one-letter code: Xanthine phosphoribosyltransferase (192 aa).

2 residues coordinate xanthine: leucine 20 and asparagine 27. 128-132 (ANGDA) contributes to the 5-phospho-alpha-D-ribose 1-diphosphate binding site. Lysine 156 is a xanthine binding site.

It belongs to the purine/pyrimidine phosphoribosyltransferase family. Xpt subfamily. As to quaternary structure, homodimer.

Its subcellular location is the cytoplasm. The catalysed reaction is XMP + diphosphate = xanthine + 5-phospho-alpha-D-ribose 1-diphosphate. The protein operates within purine metabolism; XMP biosynthesis via salvage pathway; XMP from xanthine: step 1/1. Functionally, converts the preformed base xanthine, a product of nucleic acid breakdown, to xanthosine 5'-monophosphate (XMP), so it can be reused for RNA or DNA synthesis. This is Xanthine phosphoribosyltransferase from Staphylococcus aureus (strain MRSA252).